The following is a 465-amino-acid chain: Lysosomal dipeptide transporter MFSD1 (465 aa).

Residues 1–23 (MEEEDEEARALLAGGPDEADRGA) form a disordered region. Positions 11 to 12 (LL) match the Dileucine internalization motif motif. 12 helical membrane-spanning segments follow: residues 39 to 59 (LAHRLLVLLLMCFLGFGSYFC), 83 to 103 (LLYAWYSWPNVVLCFFGGFLI), 113 to 133 (TIIFSCFVCIGQVVFALGGIF), 135 to 155 (AFWLMEFGRFVFGIGGESLAV), 170 to 191 (LNLVFGLQLSMARIGSTVNMNL), 213 to 233 (ITLMIGGITCILSLICALALA), 266 to 286 (LWLIFIICVCYYVAVFPFIGL), 303 to 323 (SAINSVVYVISAPMSPVFGLL), 331 to 351 (IIWVLCAVAATLVSHMMLAFT), 361 to 381 (LLGLSYSLLACALWPMVAFVV), 392 to 412 (FMQSIQNLGLAIISIIAGMIL), and 418 to 438 (LFLEVFFIACVSLSLLSVVLL).

This sequence belongs to the major facilitator superfamily. As to quaternary structure, homodimer. Interacts with lysosomal protein GLMP (via lumenal domain); the interaction starts while both proteins are still in the endoplasmic reticulum and is required for stabilization of MFSD1 in lysosomes but has no direct effect on its targeting to lysosomes or transporter activity.

Its subcellular location is the lysosome membrane. It carries out the reaction L-alpha-aminoacyl-L-arginine(out) = L-alpha-aminoacyl-L-arginine(in). The enzyme catalyses L-arginyl-L-alpha-amino acid(out) = L-arginyl-L-alpha-amino acid(in). It catalyses the reaction L-arginyl-glycine(out) = L-arginyl-glycine(in). The catalysed reaction is L-alpha-aminoacyl-L-lysine(out) = L-alpha-aminoacyl-L-lysine(in). It carries out the reaction L-aspartyl-L-lysine(out) = L-aspartyl-L-lysine(in). The enzyme catalyses L-alanyl-L-lysine(out) = L-alanyl-L-lysine(in). It catalyses the reaction L-lysyl-L-alpha-amino acid(out) = L-lysyl-L-alpha-amino acid(in). The catalysed reaction is L-lysyl-L-alanine(out) = L-lysyl-L-alanine(in). It carries out the reaction L-lysyl-L-lysine(out) = L-lysyl-L-lysine(in). The enzyme catalyses L-lysyl-glycine(out) = L-lysyl-glycine(in). It catalyses the reaction L-alpha-aminoacyl-L-histidine(out) = L-alpha-aminoacyl-L-histidine(in). The catalysed reaction is L-histidyl-L-alpha-amino acid(out) = L-histidyl-L-alpha-amino acid(in). It carries out the reaction L-histidyl-glycine(out) = L-histidyl-glycine(in). Lysosomal dipeptide uniporter that selectively exports lysine, arginine or histidine-containing dipeptides with a net positive charge from the lysosome lumen into the cytosol. Could play a role in a specific type of protein O-glycosylation indirectly regulating macrophages migration and tissue invasion. Also essential for liver homeostasis. The chain is Lysosomal dipeptide transporter MFSD1 from Homo sapiens (Human).